A 154-amino-acid chain; its full sequence is Small ribosomal subunit protein uS7c (154 aa).

This sequence belongs to the universal ribosomal protein uS7 family. In terms of assembly, part of the 30S ribosomal subunit.

It localises to the plastid. Its subcellular location is the chloroplast. Functionally, one of the primary rRNA binding proteins, it binds directly to 16S rRNA where it nucleates assembly of the head domain of the 30S subunit. This chain is Small ribosomal subunit protein uS7c (rps7), found in Pleurastrum terricola (Filamentous green alga).